Consider the following 227-residue polypeptide: Cytochrome c oxidase subunit 2 (227 aa).

The Mitochondrial intermembrane segment spans residues methionine 1 to serine 14. A helical transmembrane segment spans residues proline 15–methionine 45. The Mitochondrial matrix segment spans residues leucine 46–glutamine 59. Residues glutamate 60 to methionine 87 form a helical membrane-spanning segment. Over aspartate 88–isoleucine 227 the chain is Mitochondrial intermembrane. Cu cation-binding residues include histidine 161, cysteine 196, glutamate 198, cysteine 200, histidine 204, and methionine 207. Glutamate 198 is a Mg(2+) binding site.

It belongs to the cytochrome c oxidase subunit 2 family. Component of the cytochrome c oxidase (complex IV, CIV), a multisubunit enzyme composed of 14 subunits. The complex is composed of a catalytic core of 3 subunits MT-CO1, MT-CO2 and MT-CO3, encoded in the mitochondrial DNA, and 11 supernumerary subunits COX4I, COX5A, COX5B, COX6A, COX6B, COX6C, COX7A, COX7B, COX7C, COX8 and NDUFA4, which are encoded in the nuclear genome. The complex exists as a monomer or a dimer and forms supercomplexes (SCs) in the inner mitochondrial membrane with NADH-ubiquinone oxidoreductase (complex I, CI) and ubiquinol-cytochrome c oxidoreductase (cytochrome b-c1 complex, complex III, CIII), resulting in different assemblies (supercomplex SCI(1)III(2)IV(1) and megacomplex MCI(2)III(2)IV(2)). Found in a complex with TMEM177, COA6, COX18, COX20, SCO1 and SCO2. Interacts with TMEM177 in a COX20-dependent manner. Interacts with COX20. Interacts with COX16. The cofactor is Cu cation.

The protein localises to the mitochondrion inner membrane. The enzyme catalyses 4 Fe(II)-[cytochrome c] + O2 + 8 H(+)(in) = 4 Fe(III)-[cytochrome c] + 2 H2O + 4 H(+)(out). Functionally, component of the cytochrome c oxidase, the last enzyme in the mitochondrial electron transport chain which drives oxidative phosphorylation. The respiratory chain contains 3 multisubunit complexes succinate dehydrogenase (complex II, CII), ubiquinol-cytochrome c oxidoreductase (cytochrome b-c1 complex, complex III, CIII) and cytochrome c oxidase (complex IV, CIV), that cooperate to transfer electrons derived from NADH and succinate to molecular oxygen, creating an electrochemical gradient over the inner membrane that drives transmembrane transport and the ATP synthase. Cytochrome c oxidase is the component of the respiratory chain that catalyzes the reduction of oxygen to water. Electrons originating from reduced cytochrome c in the intermembrane space (IMS) are transferred via the dinuclear copper A center (CU(A)) of subunit 2 and heme A of subunit 1 to the active site in subunit 1, a binuclear center (BNC) formed by heme A3 and copper B (CU(B)). The BNC reduces molecular oxygen to 2 water molecules using 4 electrons from cytochrome c in the IMS and 4 protons from the mitochondrial matrix. This Praomys jacksoni (African forest rat) protein is Cytochrome c oxidase subunit 2 (MT-CO2).